Here is a 393-residue protein sequence, read N- to C-terminus: MVIKPKIRGFICTNAHPEGCAASVAQQIEYVSSQGDLGSGPKNVLVIGSSTGYGLASRIVSAFGYGANTLGVCFEKAPSERKTATAGWYNTAAFHKEAKEKGLFAQTINGDAFSKEIKAQAIETIKREMGQVDLVIYSLASPRRTDPETGEVYKSTLKPVGQAYTTKTYDTDKDRIHDISLEPANEDEIAQTIKVMGGEDWELWLDALAEADLLAYGCKTTAYTYIGKELTWPIYGQATIGKAKEDLDRAAAAIVSKNQEKHIEAYVSSLKALVTQASSAIPVMPLYISLIYKVMKEEGTHEGCIEQIKGLFTERLFAQSPALDEQGRLRMDGKETNEATQAKIKALWDQVTQENFHELSDYAGYHHEFLKLFGFDVEGVDYEKEQNTLADWD.

NAD(+) is bound by residues 48–53 (GSSTGY), 74–75 (FE), 111–112 (DA), and 139–140 (LA). Residue Y225 coordinates substrate. Y235 (proton donor) is an active-site residue. NAD(+) is bound by residues K244 and 273–275 (LVT).

The protein belongs to the TER reductase family. In terms of assembly, monomer.

It carries out the reaction a 2,3-saturated acyl-[ACP] + NAD(+) = a (2E)-enoyl-[ACP] + NADH + H(+). The protein operates within lipid metabolism; fatty acid biosynthesis. Involved in the final reduction of the elongation cycle of fatty acid synthesis (FAS II). Catalyzes the reduction of a carbon-carbon double bond in an enoyl moiety that is covalently linked to an acyl carrier protein (ACP). This is Enoyl-[acyl-carrier-protein] reductase [NADH] from Pseudoalteromonas atlantica (strain T6c / ATCC BAA-1087).